Here is a 204-residue protein sequence, read N- to C-terminus: Recombination protein RecR (204 aa).

A C4-type zinc finger spans residues 63–78 (CRICCNVADSELCPIC). The 96-residue stretch at 86–181 (NKICVVEQPQ…KVTRLARGLP (96 aa)) folds into the Toprim domain.

It belongs to the RecR family.

Functionally, may play a role in DNA repair. It seems to be involved in an RecBC-independent recombinational process of DNA repair. It may act with RecF and RecO. This chain is Recombination protein RecR, found in Dehalococcoides mccartyi (strain ATCC BAA-2100 / JCM 16839 / KCTC 5957 / BAV1).